The sequence spans 252 residues: MATENPQTWALWLILSEMASDMQEDKKVAKILVLGPPKAGKTTLCTFLADFMEDGDTLKKGEDSGERERKFEFEFTSVYRPTKGVRIQEFETHEFFTEQEQNELGGTRRLEDSEIQLWDVSGDKKYEDCWPAIKENAEGVILVVNPEEHKGSDLQQWFYEFVEKENIDLSCVMVILNEQGAKKTNHEQISGFEILPKLRGVHHVAHHFGSEAMQVKMEVNSFMASVLKMDQRQMGSGVDHGLGYADEQEDDF.

GTP is bound by residues 35-42 and 118-125; these read GPPKAGKT and WDVSGDKK.

This sequence belongs to the small GTPase superfamily. Rab family. Component of the IFT complex B composed of at least che-2, che-13, dyf-1, dyf-3, dyf-6, dyf-11, dyf-13, ift-20, ift-74, ift-81, ifta-2, osm-1, osm-5 and osm-6. As to expression, ciliated sensory neurons.

It localises to the cytoplasm. Its subcellular location is the cytoskeleton. The protein resides in the cilium axoneme. Its function is as follows. Component of the intraflagellar transport (IFT) complex B required for transport of proteins in the motile cilium. May be required for ciliary entrance and transport of specific ciliary cargo proteins such as che-3 which are related to motility. Regulates specific signaling activities in the cilia, such as the daf-2/insulin receptor-like transduction pathway. In Caenorhabditis elegans, this protein is Intraflagellar transport associated protein 2.